The primary structure comprises 719 residues: Serine/threonine-protein kinase CBK1 (719 aa).

Disordered stretches follow at residues M1–F75 and M100–G219. The span at Q24 to S38 shows a compositional bias: polar residues. Residues Q40–A63 are compositionally biased toward low complexity. Polar residues-rich tracts occupy residues A112–T130, G139–Y157, and G181–G219. The Protein kinase domain maps to F310–F631. ATP-binding positions include I316–V324 and K339. D433 functions as the Proton acceptor in the catalytic mechanism. In terms of domain architecture, AGC-kinase C-terminal spans R632–N717.

This sequence belongs to the protein kinase superfamily. STE Ser/Thr protein kinase family. COT1 subfamily.

It carries out the reaction L-seryl-[protein] + ATP = O-phospho-L-seryl-[protein] + ADP + H(+). The enzyme catalyses L-threonyl-[protein] + ATP = O-phospho-L-threonyl-[protein] + ADP + H(+). In terms of biological role, protein kinase that seems to play a role in the regulation of cell morphogenesis and proliferation. This chain is Serine/threonine-protein kinase CBK1 (CBK1), found in Eremothecium gossypii (strain ATCC 10895 / CBS 109.51 / FGSC 9923 / NRRL Y-1056) (Yeast).